The chain runs to 487 residues: N-succinylglutamate 5-semialdehyde dehydrogenase (487 aa).

Residues 1–23 (MTHFIKGQWHTGKGHDVASSNPA) are disordered. NAD(+) is bound at residue 220 to 225 (GSSRTG). Catalysis depends on residues Glu-243 and Cys-277.

This sequence belongs to the aldehyde dehydrogenase family. AstD subfamily.

It carries out the reaction N-succinyl-L-glutamate 5-semialdehyde + NAD(+) + H2O = N-succinyl-L-glutamate + NADH + 2 H(+). It functions in the pathway amino-acid degradation; L-arginine degradation via AST pathway; L-glutamate and succinate from L-arginine: step 4/5. Catalyzes the NAD-dependent reduction of succinylglutamate semialdehyde into succinylglutamate. The polypeptide is N-succinylglutamate 5-semialdehyde dehydrogenase (Shewanella oneidensis (strain ATCC 700550 / JCM 31522 / CIP 106686 / LMG 19005 / NCIMB 14063 / MR-1)).